The sequence spans 167 residues: U-scoloptoxin(08)-Er5a (167 aa).

The N-terminal stretch at 1-22 is a signal peptide; sequence MKTNCEFPLLCLLIVLVANVEG. Residues 23–94 constitute a propeptide that is removed on maturation; that stretch reads EVEDTGLKMV…KRLWRNWERR (72 aa). RLWRNWE repeat units follow at residues 34–40, 61–67, and 86–92; these read RLWRNWE. Q95 is modified (pyrrolidone carboxylic acid). Residues 107-113 form an RLWRNWE 4; approximate repeat; that stretch reads ELWRNWE. Positions 112 to 118 are excised as a propeptide; sequence WEDLKRR. Q119 bears the Pyrrolidone carboxylic acid mark. Residues 134 to 140 form an RLWRNWE 5 repeat; it reads RLWRNWE. The propeptide occupies 139–167; the sequence is WEDNHATLRKRSADSLSRQKRLGKERGKE. A disordered region spans residues 147–167; the sequence is RKRSADSLSRQKRLGKERGKE.

Belongs to the scoloptoxin-08 family. Expressed by the venom gland.

It localises to the secreted. This Ethmostigmus rubripes (Giant centipede) protein is U-scoloptoxin(08)-Er5a.